We begin with the raw amino-acid sequence, 284 residues long: Tropomyosin (284 aa).

Residues 1 to 284 adopt a coiled-coil conformation; the sequence is MDSIKKKMMA…DTTFAELTSF (284 aa). Positions 97 to 140 are disordered; the sequence is EDFEQSSGRLTETSTKLDDASKAAEESERNRKTLETRSISDDER. Polar residues predominate over residues 101–110; the sequence is QSSGRLTETS. The segment covering 111-140 has biased composition (basic and acidic residues); the sequence is TKLDDASKAAEESERNRKTLETRSISDDER.

Belongs to the tropomyosin family. Homodimer.

In terms of biological role, tropomyosin, in association with the troponin complex, plays a central role in the calcium dependent regulation of muscle contraction. The polypeptide is Tropomyosin (Echinococcus multilocularis (Fox tapeworm)).